A 369-amino-acid polypeptide reads, in one-letter code: Signal recognition particle receptor FtsY (369 aa).

Positions 20–42 (GEENKKEPETRQTDQLESKKEET) are enriched in basic and acidic residues. A disordered region spans residues 20-58 (GEENKKEPETRQTDQLESKKEETIQQQQNVQQPQAENKI). The segment covering 44–53 (QQQQNVQQPQ) has biased composition (low complexity). Residues 180–187 (GVNGVGKT), 262–266 (DTAGR), and 320–323 (TKVD) contribute to the GTP site.

This sequence belongs to the GTP-binding SRP family. FtsY subfamily. As to quaternary structure, part of the signal recognition particle protein translocation system, which is composed of SRP and FtsY.

The protein resides in the cell membrane. It is found in the cytoplasm. It catalyses the reaction GTP + H2O = GDP + phosphate + H(+). Involved in targeting and insertion of nascent membrane proteins into the cytoplasmic membrane. Acts as a receptor for the complex formed by the signal recognition particle (SRP) and the ribosome-nascent chain (RNC). The protein is Signal recognition particle receptor FtsY of Sulfolobus acidocaldarius (strain ATCC 33909 / DSM 639 / JCM 8929 / NBRC 15157 / NCIMB 11770).